The following is a 147-amino-acid chain: Protein LOL1 (147 aa).

The segment at 1–38 is disordered; the sequence is MVASRAPRSESPWLKKPMHGVSGSTAMASTPWSSMPPS. Residues 22–38 show a composition bias toward polar residues; the sequence is SGSTAMASTPWSSMPPS. The segment at 47 to 77 is putative zinc finger; that stretch reads QLVCSGCRNLLMYPAGATSICCAVCGTVTAV.

The protein resides in the nucleus. In terms of biological role, putative zinc finger that may be involved in programmed cell death and defense response. The polypeptide is Protein LOL1 (LOL1) (Oryza sativa subsp. japonica (Rice)).